The primary structure comprises 1183 residues: Atrophin-1 (1183 aa).

Disordered regions lie at residues 1–603 (MKTR…ITTS), 617–760 (SPAG…ARFN), and 780–855 (LEGS…HRPP). A Nuclear localization signal motif is present at residues 16–32 (RKKEAPGPREELRSRGR). The segment covering 17–29 (KKEAPGPREELRS) has biased composition (basic and acidic residues). The residue at position 34 (S34) is a Phosphoserine. Positions 45-63 (GKAEKSRQTAKKARVEETS) are enriched in basic and acidic residues. Phosphoserine occurs at positions 77, 79, 100, 102, and 106. A compositionally biased stretch (basic and acidic residues) spans 107 to 127 (LDGRSINDDGSSDPRDIDQDN). A compositionally biased stretch (polar residues) spans 128 to 151 (RSTSPSIYSPGSVENDSDSSSGLS). Pro residues-rich tracts occupy residues 157-173 (PYHP…PPDS) and 207-218 (GPPPGAPPPHPQ). Residues 261–272 (IPISSSGASGAP) are compositionally biased toward low complexity. Over residues 344 to 373 (PPGPEKGPTLAPSPHPLPPASSSAPGPPMR) the composition is skewed to pro residues. Low complexity predominate over residues 377–400 (SSCSSSSVAASSSSSAATSQYPAS). A compositionally biased stretch (polar residues) spans 415-436 (SMSVSNQPPKYTQPSLPSQAVW). Residues 510–560 (HPLESSNSHHAHPYNMSPSLGSLRPYPPGPAHLPPSHGQVSYSQAGPNGPP) form an involved in binding BAIAP2 region. A compositionally biased stretch (low complexity) spans 562–584 (SSSSNSSGSSSQAAYSCSHPSSS). The residue at position 625 (S625) is a Phosphoserine. The residue at position 634 (K634) is an N6-acetyllysine. T646 bears the Phosphothreonine mark. Residue S654 is modified to Phosphoserine. The residue at position 662 (T662) is a Phosphothreonine. Pro residues-rich tracts occupy residues 701–711 (LPPPPAAPTTG) and 732–745 (SPVP…PPPK). The residue at position 732 (S732) is a Phosphoserine; by MAPK8. 2 positions are modified to phosphoserine: S739 and S741. Basic and acidic residues predominate over residues 788–832 (KRADLVEKVRREAEQRAREEKEREREREREKEREREKERELERSV). The interval 872-887 (DTPALRTLSEYARPHV) is required for interaction with FAT1. Phosphoserine is present on S889. The disordered stretch occupies residues 921-940 (PAAREREREARERDLRDRLK). The span at 922-940 (AAREREREARERDLRDRLK) shows a compositional bias: basic and acidic residues. The Nuclear export signal motif lies at 1026–1034 (ALGNDPLAR). R1108 carries the post-translational modification Asymmetric dimethylarginine. K1176 is covalently cross-linked (Glycyl lysine isopeptide (Lys-Gly) (interchain with G-Cter in SUMO2)).

As to quaternary structure, interacts with NR2E1; the interaction represses the transcriptional activity of NR2E1. Interact (via its N-terminus) with FAT1 (via a C-terminal domain). Interacts with BAIAP2, WWP1, WWP2, WWP3 and RERE. Interacts (via its N-terminus) with MTG8; the interaction enhances transcriptional repression of MTG8. Interacts with PQBP1. Post-translationally, phosphorylated in vitro by MAPK8/JNK1 on Ser-732. In terms of tissue distribution, predominant neuronal expression, Expressed in most brain regions including striatum, hippocampus, cerebral cortex, diencephalon, brain stem and cerebellum. Highest levels in cerebellum. Also highly expressed in kidney and testis, low expression in skeletal muscle and heart.

The protein resides in the nucleus. It is found in the cytoplasm. Its subcellular location is the perinuclear region. The protein localises to the cell junction. Its function is as follows. Transcriptional corepressor. Recruits NR2E1 to repress transcription. Promotes vascular smooth cell (VSMC) migration and orientation. Corepressor of MTG8 transcriptional repression. Has some intrinsic repression activity. In Rattus norvegicus (Rat), this protein is Atrophin-1 (Atn1).